We begin with the raw amino-acid sequence, 466 residues long: Dihydrolipoyl dehydrogenase (466 aa).

Residues 34–42 (ERVHLGGIC), lysine 51, and glycine 114 each bind FAD. A disulfide bond links cysteine 42 and cysteine 47. NAD(+) is bound by residues 180–184 (GSGAI), glutamate 203, and 269–272 (AIGV). Positions 311 and 319 each coordinate FAD. Histidine 445 functions as the Proton acceptor in the catalytic mechanism.

Belongs to the class-I pyridine nucleotide-disulfide oxidoreductase family. Homodimer. It depends on FAD as a cofactor.

Its subcellular location is the cytoplasm. It carries out the reaction N(6)-[(R)-dihydrolipoyl]-L-lysyl-[protein] + NAD(+) = N(6)-[(R)-lipoyl]-L-lysyl-[protein] + NADH + H(+). In terms of biological role, lipoamide dehydrogenase is a component of the alpha-ketoacid dehydrogenase complexes. This chain is Dihydrolipoyl dehydrogenase (lpd), found in Zymomonas mobilis subsp. mobilis (strain ATCC 31821 / ZM4 / CP4).